A 460-amino-acid polypeptide reads, in one-letter code: Kynureninase (460 aa).

Pyridoxal 5'-phosphate-binding positions include L116, T117, 144 to 147 (FPSD), S199, D228, H231, and Y253. Position 254 is an N6-(pyridoxal phosphate)lysine (K254). Pyridoxal 5'-phosphate-binding residues include W288 and N316.

Belongs to the kynureninase family. As to quaternary structure, homodimer. It depends on pyridoxal 5'-phosphate as a cofactor.

The protein localises to the cytoplasm. It catalyses the reaction L-kynurenine + H2O = anthranilate + L-alanine + H(+). The enzyme catalyses 3-hydroxy-L-kynurenine + H2O = 3-hydroxyanthranilate + L-alanine + H(+). The protein operates within amino-acid degradation; L-kynurenine degradation; L-alanine and anthranilate from L-kynurenine: step 1/1. Its pathway is cofactor biosynthesis; NAD(+) biosynthesis; quinolinate from L-kynurenine: step 2/3. Catalyzes the cleavage of L-kynurenine (L-Kyn) and L-3-hydroxykynurenine (L-3OHKyn) into anthranilic acid (AA) and 3-hydroxyanthranilic acid (3-OHAA), respectively. In Debaryomyces hansenii (strain ATCC 36239 / CBS 767 / BCRC 21394 / JCM 1990 / NBRC 0083 / IGC 2968) (Yeast), this protein is Kynureninase.